The primary structure comprises 82 residues: Acyl carrier protein (82 aa).

One can recognise a Carrier domain in the interval 3-81; the sequence is SSEQEILAGL…DAVTYIAGAQ (79 aa). Position 41 is an O-(pantetheine 4'-phosphoryl)serine (S41).

This sequence belongs to the acyl carrier protein (ACP) family. 4'-phosphopantetheine is transferred from CoA to a specific serine of apo-ACP by AcpS. This modification is essential for activity because fatty acids are bound in thioester linkage to the sulfhydryl of the prosthetic group.

The protein resides in the cytoplasm. It functions in the pathway lipid metabolism; fatty acid biosynthesis. Carrier of the growing fatty acid chain in fatty acid biosynthesis. This is Acyl carrier protein from Beutenbergia cavernae (strain ATCC BAA-8 / DSM 12333 / CCUG 43141 / JCM 11478 / NBRC 16432 / NCIMB 13614 / HKI 0122).